Here is a 272-residue protein sequence, read N- to C-terminus: Acidic leucine-rich nuclear phosphoprotein 32 family member B (272 aa).

LRR repeat units lie at residues 16–40 (PAAVQELVLDNCKANDGKIEGLTDE), 43–64 (NLEFLSLINVGLFSVSDLPKLP), 65–84 (KLKKLELSENRIFGGLDRLA), and 89–110 (SLTHLNLSGNNLKDISTLEPLK). Residues 123–161 (CEVTNRSDYRETVFRLLPQLSYLDGYDREDQEAPDSDVE) enclose the LRRCT domain. Residues 149–254 (DREDQEAPDS…DEDEDEEEEE (106 aa)) are compositionally biased toward acidic residues. Residues 149-272 (DREDQEAPDS…RETDDEGEDD (124 aa)) are disordered. Phosphoserine occurs at positions 164 and 171. The segment covering 255-265 (SGKGEKRKRET) has biased composition (basic and acidic residues). The Nuclear localization signal motif lies at 260-263 (KRKR). Thr265 is modified (phosphothreonine).

The protein belongs to the ANP32 family. In terms of assembly, interacts with histones H3 and H4. Interacts with KLF5; this interaction induces promoter region-specific histone incorporation and inhibition of histone acetylation by ANP32B. In terms of processing, some glutamate residues are glycylated by TTLL8. This modification occurs exclusively on glutamate residues and results in a glycine chain on the gamma-carboxyl group. Post-translationally, directly cleaved by caspase-3/CASP3. In terms of tissue distribution, predominantly expressed in brain. Expressed in the entire embryonic brain, whereas in the adult brain its expression is restricted to the subventricular zone where there are neural progenitor cells.

Its subcellular location is the nucleus. Functionally, multifunctional protein that is involved in the regulation of many processes including cell proliferation, apoptosis, cell cycle progression or transcription. Regulates the proliferation of neuronal stem cells, differentiation of leukemic cells and progression from G1 to S phase of the cell cycle. As negative regulator of caspase-3-dependent apoptosis, may act as an antagonist of ANP32A in regulating tissue homeostasis. Exhibits histone chaperone properties, able to recruit histones to certain promoters, thus regulating the transcription of specific genes. Also plays an essential role in the nucleocytoplasmic transport of specific mRNAs via the uncommon nuclear mRNA export receptor XPO1/CRM1. Participates in the regulation of adequate adaptive immune responses by acting on mRNA expression and cell proliferation. This chain is Acidic leucine-rich nuclear phosphoprotein 32 family member B (Anp32b), found in Rattus norvegicus (Rat).